The following is a 301-amino-acid chain: Transcriptional activator FeaR (301 aa).

The 101-residue stretch at 199 to 299 folds into the HTH araC/xylS-type domain; it reads QKVVTLIDDN…GMTPGEYRRK (101 aa). 2 consecutive DNA-binding regions (H-T-H motif) follow at residues 217–238 and 266–289; these read EWIA…ADKG and LAGI…KQRF.

Its function is as follows. Positive regulator of tynA/maoA and feaB/padA, the genes for 2-phenylethylamine catabolism. The chain is Transcriptional activator FeaR (feaR) from Escherichia coli (strain K12).